Here is a 229-residue protein sequence, read N- to C-terminus: MRIYPAIDLMGGKAVRLYRGQKEKVKVYGDPVEIASRFTELVDKIHVVDLDGAFTGKPQNLDVVKEIIEETGLKVQVGGGFRSYESIAKAYEIGAENVIIGTKAFDLEFLEKITDNFDGITVSLDARGGKIAVKGWLEESSLKVGEAYEMLREYVDRFIYTSIERDGTLTGIESIERFWKDEEFIYAGGVSSVDDVLKLRRVGFSGAIVGKALYESEVSLKELLEVLEC.

The active-site Proton acceptor is the Asp8. Catalysis depends on Asp125, which acts as the Proton donor.

This sequence belongs to the HisA/HisF family.

Its subcellular location is the cytoplasm. The enzyme catalyses 1-(5-phospho-beta-D-ribosyl)-5-[(5-phospho-beta-D-ribosylamino)methylideneamino]imidazole-4-carboxamide = 5-[(5-phospho-1-deoxy-D-ribulos-1-ylimino)methylamino]-1-(5-phospho-beta-D-ribosyl)imidazole-4-carboxamide. Its pathway is amino-acid biosynthesis; L-histidine biosynthesis; L-histidine from 5-phospho-alpha-D-ribose 1-diphosphate: step 4/9. The sequence is that of 1-(5-phosphoribosyl)-5-[(5-phosphoribosylamino)methylideneamino] imidazole-4-carboxamide isomerase from Thermococcus onnurineus (strain NA1).